The primary structure comprises 316 residues: Bifunctional peptidase and (3S)-lysyl hydroxylase JMJD7 (316 aa).

C19 is subject to Cysteine sulfenic acid (-SOH). 2-oxoglutarate is bound by residues Y123 and T172. Y123 serves as a coordination point for succinate. In terms of domain architecture, JmjC spans 124-310; the sequence is IQKQNSNLSV…YCYYRMLEQM (187 aa). Fe cation contacts are provided by H175 and D177. Positions 181, 183, and 190 each coordinate 2-oxoglutarate. Succinate-binding residues include Y183 and K190. H278 serves as a coordination point for Fe cation. W292 contacts 2-oxoglutarate.

As to quaternary structure, homodimer; disulfide-linked. It depends on Fe(2+) as a cofactor. As to expression, expressed in the pars intercerebralis and fan-shaped body, regions known to be involved in sleep.

The protein resides in the nucleus. It localises to the cytoplasm. The catalysed reaction is L-lysyl-[protein] + 2-oxoglutarate + O2 = (3S)-3-hydroxy-L-lysyl-[protein] + succinate + CO2. Bifunctional enzyme that acts both as an endopeptidase and 2-oxoglutarate-dependent monooxygenase. Endopeptidase that cleaves histones N-terminal tails at the carboxyl side of methylated arginine or lysine residues, to generate 'tailless nucleosomes', which may trigger transcription elongation. Hydroxylates the guanylate binding protein 128up. May be involved in regulation of behavior and circadian rhythms. In Drosophila melanogaster (Fruit fly), this protein is Bifunctional peptidase and (3S)-lysyl hydroxylase JMJD7.